A 273-amino-acid chain; its full sequence is Protein BMH2 (273 aa).

S2 carries the N-acetylserine modification. The disordered stretch occupies residues 236–273 (DISESGQEDQQQQQQQQQQQQQQQQQAPAEQTQGEPTK). Residues 245–261 (QQQQQQQQQQQQQQQQQ) are compositionally biased toward low complexity. The span at 262 to 273 (APAEQTQGEPTK) shows a compositional bias: polar residues.

It belongs to the 14-3-3 family. Interacts with NTH1 (via N-terminus when phosphorylated by PKA); the interaction is direct and activates NTH1. Interacts with FIN1.

The protein resides in the cytoplasm. The protein localises to the nucleus. The polypeptide is Protein BMH2 (BMH2) (Saccharomyces cerevisiae (strain ATCC 204508 / S288c) (Baker's yeast)).